Reading from the N-terminus, the 83-residue chain is ATP synthase subunit c, chloroplastic (83 aa).

2 helical membrane-spanning segments follow: residues 3–23 and 57–77; these read PIIS…AAIG and LAFM…LLFA.

It belongs to the ATPase C chain family. In terms of assembly, F-type ATPases have 2 components, F(1) - the catalytic core - and F(0) - the membrane proton channel. F(1) has five subunits: alpha(3), beta(3), gamma(1), delta(1), epsilon(1). F(0) has four main subunits: a(1), b(1), b'(1) and c(10-14). The alpha and beta chains form an alternating ring which encloses part of the gamma chain. F(1) is attached to F(0) by a central stalk formed by the gamma and epsilon chains, while a peripheral stalk is formed by the delta, b and b' chains.

It localises to the plastid. It is found in the chloroplast thylakoid membrane. Functionally, f(1)F(0) ATP synthase produces ATP from ADP in the presence of a proton or sodium gradient. F-type ATPases consist of two structural domains, F(1) containing the extramembraneous catalytic core and F(0) containing the membrane proton channel, linked together by a central stalk and a peripheral stalk. During catalysis, ATP synthesis in the catalytic domain of F(1) is coupled via a rotary mechanism of the central stalk subunits to proton translocation. Key component of the F(0) channel; it plays a direct role in translocation across the membrane. A homomeric c-ring of between 10-14 subunits forms the central stalk rotor element with the F(1) delta and epsilon subunits. In Diacronema lutheri (Unicellular marine alga), this protein is ATP synthase subunit c, chloroplastic.